We begin with the raw amino-acid sequence, 234 residues long: MFKGILLCVLFAVLSANPLSQPEGFADEEERDVRGLASLLGKALKAALKIGANALGGSPQQREANDERRFADGQQDYTGWMDFGRRDDEDDVNERDVRGFGSFLGKALKAGLKIGTHFLGGAPQQREANDERRFADGQQDYTGWMDFGRRDGQQDYTGWMDFGRRDDEDDVHERDVRGFGSFLGKALKAALKIGANALGGSPQQREANDERRFADGQQDYTGWMDFGRRNGEDD.

An N-terminal signal peptide occupies residues 1 to 26; that stretch reads MFKGILLCVLFAVLSANPLSQPEGFA. Positions 27–73 are excised as a propeptide; sequence DEEERDVRGLASLLGKALKAALKIGANALGGSPQQREANDERRFADG. Y77 carries the post-translational modification Sulfotyrosine. F83 is subject to Phenylalanine amide. The propeptide occupies 87 to 137; it reads DDEDDVNERDVRGFGSFLGKALKAGLKIGTHFLGGAPQQREANDERRFADG. Y141 carries the sulfotyrosine modification. Position 147 is a phenylalanine amide (F147). The propeptide occupies 151–152; the sequence is DG. A Sulfotyrosine modification is found at Y156. The residue at position 162 (F162) is a Phenylalanine amide. Residues 166-216 constitute a propeptide that is removed on maturation; it reads DDEDDVHERDVRGFGSFLGKALKAALKIGANALGGSPQQREANDERRFADG. A disordered region spans residues 198–234; sequence LGGSPQQREANDERRFADGQQDYTGWMDFGRRNGEDD. At Y220 the chain carries Sulfotyrosine. At F226 the chain carries Phenylalanine amide. Positions 230 to 234 are excised as a propeptide; it reads NGEDD.

Belongs to the gastrin/cholecystokinin family. In terms of tissue distribution, expressed by the skin glands.

Its subcellular location is the secreted. The pharmacological activities of caerulein are quite similar to the physiological activities of gastrin and related peptides. The sequence is that of Preprocaerulein type-4 from Xenopus borealis (Kenyan clawed frog).